The sequence spans 338 residues: DNA-directed RNA polymerase subunit alpha (338 aa).

The segment at 1–226 (MLIAQRPSLT…ELFGLARELN (226 aa)) is alpha N-terminal domain (alpha-NTD). The segment at 243–338 (LAADLVMPIE…DAGFLETEHY (96 aa)) is alpha C-terminal domain (alpha-CTD).

This sequence belongs to the RNA polymerase alpha chain family. As to quaternary structure, homodimer. The RNAP catalytic core consists of 2 alpha, 1 beta, 1 beta' and 1 omega subunit. When a sigma factor is associated with the core the holoenzyme is formed, which can initiate transcription.

The enzyme catalyses RNA(n) + a ribonucleoside 5'-triphosphate = RNA(n+1) + diphosphate. Functionally, DNA-dependent RNA polymerase catalyzes the transcription of DNA into RNA using the four ribonucleoside triphosphates as substrates. This chain is DNA-directed RNA polymerase subunit alpha, found in Streptomyces avermitilis (strain ATCC 31267 / DSM 46492 / JCM 5070 / NBRC 14893 / NCIMB 12804 / NRRL 8165 / MA-4680).